Here is a 209-residue protein sequence, read N- to C-terminus: Thymidylate kinase (209 aa).

An ATP-binding site is contributed by 10–17 (GLDGAGKS).

The protein belongs to the thymidylate kinase family.

The enzyme catalyses dTMP + ATP = dTDP + ADP. Functionally, phosphorylation of dTMP to form dTDP in both de novo and salvage pathways of dTTP synthesis. The chain is Thymidylate kinase from Francisella tularensis subsp. tularensis (strain FSC 198).